We begin with the raw amino-acid sequence, 173 residues long: dCTP deaminase (173 aa).

Residues 97 to 102 and aspartate 113 contribute to the dCTP site; that span reads RSSFAR. Residue glutamate 123 is the Proton donor/acceptor of the active site. DCTP is bound by residues tyrosine 155 and glutamine 162.

This sequence belongs to the dCTP deaminase family. In terms of assembly, homotrimer.

It carries out the reaction dCTP + H2O + H(+) = dUTP + NH4(+). Its pathway is pyrimidine metabolism; dUMP biosynthesis; dUMP from dCTP (dUTP route): step 1/2. Functionally, catalyzes the deamination of dCTP to dUTP. This is dCTP deaminase from Acidianus ambivalens (Desulfurolobus ambivalens).